The primary structure comprises 210 residues: Large ribosomal subunit protein bL25 (210 aa).

Residues 179–210 form a disordered region; sequence LPPQQEEEIHSGEQQEPGQPEAEEGRETTPEG. Basic and acidic residues predominate over residues 201–210; that stretch reads EEGRETTPEG.

The protein belongs to the bacterial ribosomal protein bL25 family. CTC subfamily. As to quaternary structure, part of the 50S ribosomal subunit; part of the 5S rRNA/L5/L18/L25 subcomplex. Contacts the 5S rRNA. Binds to the 5S rRNA independently of L5 and L18.

This is one of the proteins that binds to the 5S RNA in the ribosome where it forms part of the central protuberance. This Geobacillus thermodenitrificans (strain NG80-2) protein is Large ribosomal subunit protein bL25.